The sequence spans 455 residues: UDP-N-acetylmuramoylalanine--D-glutamate ligase (455 aa).

Gly117–Thr123 serves as a coordination point for ATP.

The protein belongs to the MurCDEF family.

Its subcellular location is the cytoplasm. It carries out the reaction UDP-N-acetyl-alpha-D-muramoyl-L-alanine + D-glutamate + ATP = UDP-N-acetyl-alpha-D-muramoyl-L-alanyl-D-glutamate + ADP + phosphate + H(+). It participates in cell wall biogenesis; peptidoglycan biosynthesis. Functionally, cell wall formation. Catalyzes the addition of glutamate to the nucleotide precursor UDP-N-acetylmuramoyl-L-alanine (UMA). The chain is UDP-N-acetylmuramoylalanine--D-glutamate ligase from Alkaliphilus metalliredigens (strain QYMF).